Here is a 73-residue protein sequence, read N- to C-terminus: Small ribosomal subunit protein uS15c (73 aa).

It belongs to the universal ribosomal protein uS15 family. As to quaternary structure, part of the 30S ribosomal subunit.

It is found in the plastid. It localises to the chloroplast. This chain is Small ribosomal subunit protein uS15c (rps15), found in Welwitschia mirabilis (Tree tumbo).